Consider the following 162-residue polypeptide: Precorrin-2 dehydrogenase (162 aa).

NAD(+) is bound by residues 20–21 and 41–42; these read SI and PD.

Belongs to the precorrin-2 dehydrogenase / sirohydrochlorin ferrochelatase family.

It carries out the reaction precorrin-2 + NAD(+) = sirohydrochlorin + NADH + 2 H(+). It functions in the pathway cofactor biosynthesis; adenosylcobalamin biosynthesis; sirohydrochlorin from precorrin-2: step 1/1. It participates in porphyrin-containing compound metabolism; siroheme biosynthesis; sirohydrochlorin from precorrin-2: step 1/1. In terms of biological role, catalyzes the dehydrogenation of precorrin-2 to form sirohydrochlorin which is used as a precursor in both siroheme biosynthesis and in the anaerobic branch of adenosylcobalamin biosynthesis. This is Precorrin-2 dehydrogenase (sirC) from Bacillus subtilis (strain 168).